The chain runs to 746 residues: MNLEDISMIMKLFDSNMHKLQGNLRSYQTEMHQIHKELTEKLSHADLLYRSLIPLHDHLVASLSEVNAHVMKLNVQLHINRQSVRLGDYEYYEKSIDNPYSSIRSGLQAIEKPGCAEAICQSSKPAFVECLPSSTSEEVPVVAVQEASSTNQLDAISVVNENLSEERDATPQPLAVSKNMEETMPSNPFHEQLEGSLEEIPVGSKIVVETEKANNPVRSEASAPATSDNQSLLAAKQGTQTIGTGICNKISKSTINMPNNWQLENPTEVTAASIEKVNKLPKSPRNRFLLPPKGGTETTRRDIYNQILKDMAAFPENTIVTAVLASVDVTDNCAYVAKWDESSDRIKKVLQRQLPLQELDQLPDYGDIFAVLDSINNIITRITINSSSAGGGYDAYLIDFGEHIHFDGNETIFKLPDDIKRLPAQAIRCDLINCDIANMHCFVNTYIKIRVHENNNSTLVAEPVIDRLSRPTKTNTTKYPAGITEDDMAMLNEIDESTSDPLKAVLGFRPKDEQRICRHYDPKLNGCFKGNNCRFAHEPFAPNGATKDVELARALPETIFDTTVHFEIGSIVGILITFINGPTEVYGQFLDGSPPLVWDKKDVPENKRTFKSKPRLLDIVLALYSDGCFYRAQIIDEFPSEYMIFYVDYGNTEFVPLSCLAPCENVDSFKPHRVFSFHIEGIVRSKNLTHQKTIECIEYLKSKLLNTEMNVHLVQRLPDGFLIRFLDDWKYIPEQLLQRNYAQVSQ.

The interval 1 to 310 is involved in homooligomerization; the sequence is MNLEDISMIM…RDIYNQILKD (310 aa). The segment at 311 to 489 is non-canonical tudor domain; that stretch reads MAAFPENTIV…PAGITEDDMA (179 aa). Residues 511 to 540 form a C3H1-type zinc finger; the sequence is KDEQRICRHYDPKLNGCFKGNNCRFAHEPF. Residues 613–670 form the Tudor domain; it reads KPRLLDIVLALYSDGCFYRAQIIDEFPSEYMIFYVDYGNTEFVPLSCLAPCENVDSFK.

It belongs to the Tudor domain containing protein family. In terms of assembly, homooligomerizes (via N-terminus). Component of the ping-pong piRNA processing (4P) complex consisting of krimp, aub and AGO3; a single molecule of krimp can bind both aub and AGO3 without the need for homooligomerization. Interacts (via canonical tudor domain) with aub (via N-terminus when symmetrically dimethylated on arginine residues). Interacts (via non-canonical tudor domain) with AGO3 (via N-terminus when unmethylated on arginine residues); this interaction leads to symmetrical dimethylation on AGO3 arginine residues and its subsequent dissociation from krimp. Krimp associated AGO3 is mostly free of piRNA binding and the interaction plays an important role in the loading of AGO3 with piRNAs; piRNA binding stimulates methylation of ACO3 by the csul/PRMT5 methylosome complex and promotes dissociation of the two proteins. In terms of tissue distribution, widely expressed in female germline cells, including differentiating germ cells in germarium and egg chambers (at protein level).

The protein resides in the cytoplasm. It is found in the perinuclear region. It localises to the cytoplasmic ribonucleoprotein granule. Stable structural component of the perinuclear meiotic nuage, a germline-specific subcellular membraneless ribonucleoprotein compartment involved in production of transposable element-repressing Piwi-interacting RNA (piRNA)-induced silencing complexes (piRISCs), which are essential for maintaining germline integrity during oogenesis. Scaffold component of the ping-pong piRNA processing (4P) complex that recruits the Piwi proteins aub and AGO3 to specific subregions of the nuage where it coordinates their activity in the ping-pong amplification step of secondary piRNA biogenesis. Binds methylated aub, which is associated with piRNA, and unmethylated AGO3, which is not associated with piRNA, bringing the Piwi proteins into close proximity and facilitating the loading of freshly cut piRNAs generated by aub onto AGO3. Promotes asymmetric ping-pong amplification by aub and AGO3 to bias production towards antisense piRNAs capable of silencing transposable elements. Required for symmetrical dimethylation of AGO3, probably by recruitment to the nuage where methylosome components are located; dimethylation promotes AGO3 dissociation and interaction with other tudor-domain containing proteins such as tud. Required for the recruitment of mael to the perinuclear meiotic nuage. Required for the recruitment of aub to the nuage in testes but not in ovaries. Involved in repression of long interspersed nuclear elements (LINEs) including HeT-A, I-element LINEs and possibly mst40, but not TART LINEs. This Drosophila melanogaster (Fruit fly) protein is Tudor domain-containing protein krimp.